Consider the following 176-residue polypeptide: MMETTENSMREIVIDKVVVNIGVGAAGERLNRAAKVLELLTHHKPAFTSAKRTVRDFNIRKGLNIGVKVTLRKDDALSFLKEAFYAKDYKIPVYSFDKNGNAYFGISDYTDFKGMKYDPDIGIFGMDIAIVFRRRGGYRIEKRRIKKMHIPKKMRISKEETIKYLQENFNVKIIGD.

This sequence belongs to the universal ribosomal protein uL5 family. Part of the 50S ribosomal subunit; contacts the 5S rRNA and probably tRNA. Forms a bridge to the 30S subunit in the 70S ribosome.

Functionally, this is one of the proteins that bind and probably mediate the attachment of the 5S RNA into the large ribosomal subunit, where it forms part of the central protuberance. In the 70S ribosome it contacts protein S13 of the 30S subunit (bridge B1b), connecting the 2 subunits; this bridge is implicated in subunit movement. May contact the P site tRNA; the 5S rRNA and some of its associated proteins might help stabilize positioning of ribosome-bound tRNAs. The sequence is that of Large ribosomal subunit protein uL5 from Picrophilus torridus (strain ATCC 700027 / DSM 9790 / JCM 10055 / NBRC 100828 / KAW 2/3).